A 100-amino-acid polypeptide reads, in one-letter code: MQLTPQEKDKLLIFTAALVAERRKNRGLKLNYPEAVAYISAAILEGARDGNTVAELMSYGTTLLTRDDVMEGIAEMVHEVQVEATFPDGTKLVTVHNPIR.

The protein belongs to the urease gamma subunit family. In terms of assembly, heterotrimer of UreA (gamma), UreB (beta) and UreC (alpha) subunits. Three heterotrimers associate to form the active enzyme.

The protein localises to the cytoplasm. It carries out the reaction urea + 2 H2O + H(+) = hydrogencarbonate + 2 NH4(+). It participates in nitrogen metabolism; urea degradation; CO(2) and NH(3) from urea (urease route): step 1/1. The chain is Urease subunit gamma from Trichormus variabilis (strain ATCC 29413 / PCC 7937) (Anabaena variabilis).